The sequence spans 209 residues: Uracil phosphoribosyltransferase (209 aa).

Residues arginine 79, arginine 104, and 131–139 (DPMLATGGS) contribute to the 5-phospho-alpha-D-ribose 1-diphosphate site. Residues isoleucine 194 and 199–201 (GDA) each bind uracil. Aspartate 200 contributes to the 5-phospho-alpha-D-ribose 1-diphosphate binding site.

Belongs to the UPRTase family. Mg(2+) is required as a cofactor.

It carries out the reaction UMP + diphosphate = 5-phospho-alpha-D-ribose 1-diphosphate + uracil. Its pathway is pyrimidine metabolism; UMP biosynthesis via salvage pathway; UMP from uracil: step 1/1. Its activity is regulated as follows. Allosterically activated by GTP. Catalyzes the conversion of uracil and 5-phospho-alpha-D-ribose 1-diphosphate (PRPP) to UMP and diphosphate. This Streptococcus uberis (strain ATCC BAA-854 / 0140J) protein is Uracil phosphoribosyltransferase.